The primary structure comprises 899 residues: Androgen receptor (899 aa).

Positions 1-537 (MEVQLGLGRV…PIDYYFPPQK (537 aa)) are modulating. Residues 1 to 566 (MEVQLGLGRV…GSCKVFFKRA (566 aa)) form an interaction with ZNF318 region. 2 disordered regions span residues 35 to 146 (QNPG…LSLL) and 175 to 222 (QQQQ…LGGN). At Ser-61 the chain carries Phosphoserine; by CDK9. Residue Ser-75 is modified to Phosphoserine. Composition is skewed to low complexity over residues 94 to 103 (QPSQQQAASE) and 175 to 193 (QQQQQQQHQQQHQQHQQQQ). Positions 210-222 (APSSSKDSYLGGN) are enriched in polar residues. Position 218 is a phosphotyrosine; by CSK (Tyr-218). The residue at position 251 (Ser-251) is a Phosphoserine. Tyr-262 carries the post-translational modification Phosphotyrosine; by CSK and TNK2. Phosphotyrosine; by CSK is present on residues Tyr-302, Tyr-341, Tyr-352, and Tyr-357. The residue at position 358 (Tyr-358) is a Phosphotyrosine; by CSK and TNK2. Lys-381 participates in a covalent cross-link: Glycyl lysine isopeptide (Lys-Gly) (interchain with G-Cter in SUMO). A Phosphotyrosine; by CSK modification is found at Tyr-388. The interval 436-471 (EGQLYGPGGGGGSSSPSDAGPVAPYGYTRPPQGLTS) is disordered. Lys-500 participates in a covalent cross-link: Glycyl lysine isopeptide (Lys-Gly) (interchain with G-Cter in SUMO). Tyr-514 and Tyr-531 each carry phosphotyrosine; by CSK. The segment at 531–898 (YYFPPQKTCL…GKVKPIYFHT (368 aa)) is interaction with LPXN. Residues 538–611 (TCLICGDEAS…AGMTLGARKL (74 aa)) constitute a DNA-binding region (nuclear receptor). NR C4-type zinc fingers lie at residues 539–559 (CLICGDEASGCHYGALTCGSC) and 575–599 (CASRNDCTIDKFRRKNCPSCRLRKC). The interaction with HIPK3 stretch occupies residues 551–641 (YGALTCGSCK…TEDPSQKMTV (91 aa)). Residues 571 to 898 (QKYLCASRND…GKVKPIYFHT (328 aa)) form an interaction with CCAR1 region. Residues 604 to 898 (MTLGARKLKK…GKVKPIYFHT (295 aa)) form an interaction with KAT7 region. Ser-630 carries the post-translational modification Phosphoserine. Positions 648-879 (ECQPIFLNVL…DFPEMMAEII (232 aa)) constitute an NR LBD domain. Asn-685 and Arg-732 together coordinate 17beta-hydroxy-5alpha-androstan-3-one. Glycyl lysine isopeptide (Lys-Gly) (interchain with G-Cter in ubiquitin) cross-links involve residues Lys-825 and Lys-827. Residue Thr-857 participates in 17beta-hydroxy-5alpha-androstan-3-one binding. Phosphotyrosine; by CSK is present on Tyr-895.

It belongs to the nuclear hormone receptor family. NR3 subfamily. As to quaternary structure, binds DNA as a homodimer. Part of a ternary complex containing AR, EFCAB6/DJBP and PARK7. Interacts with HIPK3 and NR0B2 in the presence of androgen. The ligand binding domain interacts with KAT7/HBO1 in the presence of dihydrotestosterone. Interacts with EFCAB6/DJBP, PQBP1, RANBP9, SPDEF, SRA1, TGFB1I1, ZNF318 and RREB1. The AR N-terminal poly-Gln region binds Ran resulting in enhancement of AR-mediated transactivation. Ran-binding decreases as the poly-Gln length increases. Interacts with ZMIZ1/ZIMP10 and ZMIZ2/ZMIP7 which both enhance its transactivation activity. Interacts with RBAK. Interacts via the ligand-binding domain with LXXLL and FXXLF motifs from NCOA1, NCOA2, NCOA3 and MAGEA11. Interacts (via nuclear receptor DNA binding domain and nuclear receptor ligand binding domain) with NCOA4. Interacts with HIP1 (via coiled coil domain). Interacts with SLC30A9 and RAD54L2/ARIP4. Interacts with MACROD1 (via macro domain). Interacts (via ligand-binding domain) with TRIM68. Interacts with TNK2. Interacts with USP26. Interacts with RNF6. Interacts (regulated by RNF6 probably through polyubiquitination) with RNF14; regulates AR transcriptional activity. Interacts with PRMT2 and TRIM24. Interacts with RACK1. Interacts with RANBP10; this interaction enhances hormone-induced AR transcriptional activity. Interacts with PRPF6 in a hormone-independent way; this interaction enhances hormone-induced AR transcriptional activity. Interacts with STK4/MST1. Interacts with ZIPK/DAPK3. Interacts with LPXN. Interacts with MAK. Part of a complex containing AR, MAK and NCOA3. Interacts with CRY1. Interacts with CCAR1 and GATA2. Interacts with BUD31. Interacts with ARID4A. Interacts with ARID4B. Interacts (via NR LBD domain) with ZBTB7A; the interaction is direct and androgen-dependent. Interacts with NCOR1. Interacts with NCOR2. Interacts with CRY2 in a ligand-dependent manner. In terms of processing, phosphorylated in prostate cancer cells in response to several growth factors including EGF. Phosphorylation is induced by c-Src kinase (CSK). Tyr-514 is one of the major phosphorylation sites and an increase in phosphorylation and Src kinase activity is associated with prostate cancer progression. Phosphorylation by TNK2 enhances the DNA-binding and transcriptional activity. Phosphorylation at Ser-61 by CDK9 regulates AR promoter selectivity and cell growth. Phosphorylation by PAK6 leads to AR-mediated transcription inhibition. Post-translationally, sumoylated on Lys-381 (major) and Lys-500. Ubiquitinated. Deubiquitinated by USP26. 'Lys-6' and 'Lys-27'-linked polyubiquitination by RNF6 modulates AR transcriptional activity and specificity. Palmitoylated by ZDHHC7 and ZDHHC21. Palmitoylation is required for plasma membrane targeting and for rapid intracellular signaling via ERK and AKT kinases and cAMP generation.

It localises to the nucleus. It is found in the cytoplasm. Steroid hormone receptors are ligand-activated transcription factors that regulate eukaryotic gene expression and affect cellular proliferation and differentiation in target tissues. Transcription factor activity is modulated by bound coactivator and corepressor proteins like ZBTB7A that recruits NCOR1 and NCOR2 to the androgen response elements/ARE on target genes, negatively regulating androgen receptor signaling and androgen-induced cell proliferation. Transcription activation is also down-regulated by NR0B2. Activated, but not phosphorylated, by HIPK3 and ZIPK/DAPK3. The polypeptide is Androgen receptor (Ar) (Mus musculus (Mouse)).